The following is a 301-amino-acid chain: MQVLRTPDERFEGLADWPFAPKYVQVKDADGTLLRIHHVDEGPRDGAPVLLMHGEPSWAYLYRHIIPRLVAAGHRAIAPDLVGFGRSDKPADRGDYTYARHVAWMSAWLEAVDLRGAYLFCQDWGGLIGLRLVAAYPERFAGVVVSNTGLPVGGGAMTDGFKAWLQFSQTVPELPIGFLLNGGSVRELSAAEMAAYDAPFPDESYKEGARQFPALVPVTSEHAGVAENQAAWKVLEAWDKPLVTAFSDGDPITKGGEVPFRERVPGARGQPHVTLHGGHFVQEDSPAEIAGLLDGLIRRSR.

D123 acts as the Nucleophile in catalysis. The active-site Proton donor is the D250. H279 acts as the Proton acceptor in catalysis.

It belongs to the haloalkane dehalogenase family. Type 1 subfamily. Monomer.

The enzyme catalyses 1-haloalkane + H2O = a halide anion + a primary alcohol + H(+). Functionally, catalyzes hydrolytic cleavage of carbon-halogen bonds in halogenated aliphatic compounds, leading to the formation of the corresponding primary alcohols, halide ions and protons. The protein is Haloalkane dehalogenase of Phenylobacterium zucineum (strain HLK1).